A 332-amino-acid polypeptide reads, in one-letter code: Ketol-acid reductoisomerase (NADP(+)) (332 aa).

Positions 1–182 (MAQTWKDTDI…GSARAGLIKT (182 aa)) constitute a KARI N-terminal Rossmann domain. NADP(+) contacts are provided by residues 25–28 (YGIQ), lysine 48, serine 53, and 83–86 (DMIQ). The active site involves histidine 108. Glycine 134 contributes to the NADP(+) binding site. The region spanning 183–329 (AFKEEVETDW…KEMRKMMWPD (147 aa)) is the KARI C-terminal knotted domain. Residues aspartate 191, glutamate 195, glutamate 227, and glutamate 231 each contribute to the Mg(2+) site. Serine 252 serves as a coordination point for substrate.

It belongs to the ketol-acid reductoisomerase family. The cofactor is Mg(2+).

The enzyme catalyses (2R)-2,3-dihydroxy-3-methylbutanoate + NADP(+) = (2S)-2-acetolactate + NADPH + H(+). The catalysed reaction is (2R,3R)-2,3-dihydroxy-3-methylpentanoate + NADP(+) = (S)-2-ethyl-2-hydroxy-3-oxobutanoate + NADPH + H(+). It participates in amino-acid biosynthesis; L-isoleucine biosynthesis; L-isoleucine from 2-oxobutanoate: step 2/4. It functions in the pathway amino-acid biosynthesis; L-valine biosynthesis; L-valine from pyruvate: step 2/4. In terms of biological role, involved in the biosynthesis of branched-chain amino acids (BCAA). Catalyzes an alkyl-migration followed by a ketol-acid reduction of (S)-2-acetolactate (S2AL) to yield (R)-2,3-dihydroxy-isovalerate. In the isomerase reaction, S2AL is rearranged via a Mg-dependent methyl migration to produce 3-hydroxy-3-methyl-2-ketobutyrate (HMKB). In the reductase reaction, this 2-ketoacid undergoes a metal-dependent reduction by NADPH to yield (R)-2,3-dihydroxy-isovalerate. The chain is Ketol-acid reductoisomerase (NADP(+)) from Nitrosopumilus maritimus (strain SCM1).